A 387-amino-acid chain; its full sequence is 1-deoxy-D-xylulose 5-phosphate reductoisomerase (387 aa).

NADPH is bound by residues T10, G11, I13, N38, and N122. K123 is a binding site for 1-deoxy-D-xylulose 5-phosphate. E124 contributes to the NADPH binding site. A Mn(2+)-binding site is contributed by D148. 1-deoxy-D-xylulose 5-phosphate contacts are provided by S149, E150, S174, and H197. E150 provides a ligand contact to Mn(2+). G203 provides a ligand contact to NADPH. S210, N215, K216, and E219 together coordinate 1-deoxy-D-xylulose 5-phosphate. E219 lines the Mn(2+) pocket.

Belongs to the DXR family. The cofactor is Mg(2+). It depends on Mn(2+) as a cofactor.

The catalysed reaction is 2-C-methyl-D-erythritol 4-phosphate + NADP(+) = 1-deoxy-D-xylulose 5-phosphate + NADPH + H(+). Its pathway is isoprenoid biosynthesis; isopentenyl diphosphate biosynthesis via DXP pathway; isopentenyl diphosphate from 1-deoxy-D-xylulose 5-phosphate: step 1/6. In terms of biological role, catalyzes the NADPH-dependent rearrangement and reduction of 1-deoxy-D-xylulose-5-phosphate (DXP) to 2-C-methyl-D-erythritol 4-phosphate (MEP). The chain is 1-deoxy-D-xylulose 5-phosphate reductoisomerase from Ehrlichia canis (strain Jake).